We begin with the raw amino-acid sequence, 413 residues long: Arginine biosynthesis bifunctional protein ArgJ (413 aa).

Substrate contacts are provided by threonine 158, lysine 184, threonine 195, glutamate 285, asparagine 408, and serine 413. The active-site Nucleophile is the threonine 195.

Belongs to the ArgJ family. Heterotetramer of two alpha and two beta chains.

It localises to the cytoplasm. The catalysed reaction is N(2)-acetyl-L-ornithine + L-glutamate = N-acetyl-L-glutamate + L-ornithine. It catalyses the reaction L-glutamate + acetyl-CoA = N-acetyl-L-glutamate + CoA + H(+). The protein operates within amino-acid biosynthesis; L-arginine biosynthesis; L-ornithine and N-acetyl-L-glutamate from L-glutamate and N(2)-acetyl-L-ornithine (cyclic): step 1/1. It functions in the pathway amino-acid biosynthesis; L-arginine biosynthesis; N(2)-acetyl-L-ornithine from L-glutamate: step 1/4. In terms of biological role, catalyzes two activities which are involved in the cyclic version of arginine biosynthesis: the synthesis of N-acetylglutamate from glutamate and acetyl-CoA as the acetyl donor, and of ornithine by transacetylation between N(2)-acetylornithine and glutamate. The polypeptide is Arginine biosynthesis bifunctional protein ArgJ (Brucella suis biovar 1 (strain 1330)).